A 491-amino-acid chain; its full sequence is Anthranilate synthase component 1 (491 aa).

L-tryptophan contacts are provided by residues serine 49 and 271–273 (PYL). 306-307 (GT) is a chorismate binding site. Residue glutamate 333 participates in Mg(2+) binding. Chorismate-binding positions include tyrosine 421, arginine 441, 455 to 457 (GAG), and glycine 457. Glutamate 470 contributes to the Mg(2+) binding site.

The protein belongs to the anthranilate synthase component I family. Heterotetramer consisting of two non-identical subunits: a beta subunit (TrpG) and a large alpha subunit (TrpE). Mg(2+) is required as a cofactor.

The catalysed reaction is chorismate + L-glutamine = anthranilate + pyruvate + L-glutamate + H(+). It functions in the pathway amino-acid biosynthesis; L-tryptophan biosynthesis; L-tryptophan from chorismate: step 1/5. With respect to regulation, feedback inhibited by tryptophan. Part of a heterotetrameric complex that catalyzes the two-step biosynthesis of anthranilate, an intermediate in the biosynthesis of L-tryptophan. In the first step, the glutamine-binding beta subunit (TrpG) of anthranilate synthase (AS) provides the glutamine amidotransferase activity which generates ammonia as a substrate that, along with chorismate, is used in the second step, catalyzed by the large alpha subunit of AS (TrpE) to produce anthranilate. In the absence of TrpG, TrpE can synthesize anthranilate directly from chorismate and high concentrations of ammonia. The protein is Anthranilate synthase component 1 (trpE) of Neisseria meningitidis serogroup C / serotype 2a (strain ATCC 700532 / DSM 15464 / FAM18).